The sequence spans 338 residues: MNLQKFPRYPLTFGPTPIQPLKRLSAHLGGKVELYAKRDDCNSGLAFGGNKTRKLEYLIPDALAQGCDTLVSIGGIQSNQTRQVAAVAAHLGMKCVLVQENWVNYHDAVYDRVGNIQMSRMMGADVRLVPDGFDIGFRKSWEDALADVRARGGKPYAIPAGCSDHPLGGLGFVGFAEEVRAQEAELGFQFDYVVVCSVTGSTQAGMVVGFAADGRADRVIGVDASAKPAQTREQILRIAKHTADRVELGRDITSADVVLDERFGGPEYGLPNEGTLEAIRLCAKLEGVLTDPVYEGKSMHGMIEKVRLGEFPAGSKVLYAHLGGVPALNAYSFLFRDG.

Position 51 is an N6-(pyridoxal phosphate)lysine (K51). Catalysis depends on S78, which acts as the Nucleophile.

The protein belongs to the ACC deaminase/D-cysteine desulfhydrase family. As to quaternary structure, homotrimer. The cofactor is pyridoxal 5'-phosphate.

The catalysed reaction is 1-aminocyclopropane-1-carboxylate + H2O = 2-oxobutanoate + NH4(+). Catalyzes a cyclopropane ring-opening reaction, the irreversible conversion of 1-aminocyclopropane-1-carboxylate (ACC) to ammonia and alpha-ketobutyrate. Allows growth on ACC as a nitrogen source. The protein is 1-aminocyclopropane-1-carboxylate deaminase of Burkholderia pseudomallei (strain 1710b).